The chain runs to 506 residues: Anaerobic nitric oxide reductase transcription regulator NorR (506 aa).

D57 bears the 4-aspartylphosphate mark. In terms of domain architecture, Sigma-54 factor interaction spans 187–416 (MIGLSPAMTQ…LEHAIHRAVV (230 aa)). ATP contacts are provided by residues 215–222 (GETGTGKE) and 278–287 (ADNGTLFLDE). A DNA-binding region (H-T-H motif) is located at residues 481 to 500 (WAASARALETDVANLHRLAK).

Its pathway is nitrogen metabolism; nitric oxide reduction. In terms of biological role, required for the expression of anaerobic nitric oxide (NO) reductase, acts as a transcriptional activator for at least the norVW operon. Activation also requires sigma-54. The chain is Anaerobic nitric oxide reductase transcription regulator NorR from Salmonella paratyphi C (strain RKS4594).